Here is a 129-residue protein sequence, read N- to C-terminus: Phosphoribosyl-AMP cyclohydrolase (129 aa).

Aspartate 76 contacts Mg(2+). Residue cysteine 77 participates in Zn(2+) binding. Mg(2+) is bound by residues aspartate 78 and aspartate 80. Zn(2+) is bound by residues cysteine 97 and cysteine 104.

It belongs to the PRA-CH family. As to quaternary structure, homodimer. The cofactor is Mg(2+). It depends on Zn(2+) as a cofactor.

It localises to the cytoplasm. The catalysed reaction is 1-(5-phospho-beta-D-ribosyl)-5'-AMP + H2O = 1-(5-phospho-beta-D-ribosyl)-5-[(5-phospho-beta-D-ribosylamino)methylideneamino]imidazole-4-carboxamide. It participates in amino-acid biosynthesis; L-histidine biosynthesis; L-histidine from 5-phospho-alpha-D-ribose 1-diphosphate: step 3/9. Its function is as follows. Catalyzes the hydrolysis of the adenine ring of phosphoribosyl-AMP. The protein is Phosphoribosyl-AMP cyclohydrolase of Leptothrix cholodnii (strain ATCC 51168 / LMG 8142 / SP-6) (Leptothrix discophora (strain SP-6)).